Consider the following 67-residue polypeptide: Ayadualin (67 aa).

An N-terminal signal peptide occupies residues 1-20; that stretch reads MNKIILFSAVFLALVFCAEA. Over residues 35–54 the composition is skewed to acidic residues; sequence PDDTVDIDEGLPDAFDEDYE. Residues 35–67 form a disordered region; that stretch reads PDDTVDIDEGLPDAFDEDYEQDGHNPYPCRGDC. The Integrin-binding motif motif lies at 64–66; it reads RGD.

Salivary gland.

Its subcellular location is the secreted. Functionally, inhibits collagen- and ADP-induced host platelet aggregation by blocking the binding of host integrin alpha-IIb/beta-3 (ITGA2B/ITGB3) to fibrinogen. Inhibits the intrinsic blood coagulation pathway in the host by blocking the activity of host coagulation factor XIIa (F12). This chain is Ayadualin, found in Lutzomyia ayacuchensis (Sand fly).